The sequence spans 51 residues: Basic phospholipase A2 Bfon11 (51 aa).

Positions 27, 29, and 31 each coordinate Ca(2+). Cysteine 28 and cysteine 43 are joined by a disulfide. Histidine 46 is a catalytic residue. Aspartate 47 contacts Ca(2+).

This sequence belongs to the phospholipase A2 family. Group II subfamily. D49 sub-subfamily. Requires Ca(2+) as cofactor. As to expression, expressed by the venom gland.

The protein resides in the secreted. It catalyses the reaction a 1,2-diacyl-sn-glycero-3-phosphocholine + H2O = a 1-acyl-sn-glycero-3-phosphocholine + a fatty acid + H(+). Its function is as follows. Snake venom phospholipase A2 (PLA2) that impairs hemostasis. PLA2 catalyzes the calcium-dependent hydrolysis of the 2-acyl groups in 3-sn-phosphoglycerides. The protein is Basic phospholipase A2 Bfon11 of Bothrops fonsecai (Fonseca's lancehead).